We begin with the raw amino-acid sequence, 134 residues long: Large ribosomal subunit protein uL18 (134 aa).

The disordered stretch occupies residues 1 to 25 (MSNTAQNEKRLPVGKDISTRRRTAR). Positions 7 to 19 (NEKRLPVGKDIST) are enriched in basic and acidic residues.

The protein belongs to the universal ribosomal protein uL18 family. In terms of assembly, part of the 50S ribosomal subunit; part of the 5S rRNA/L5/L18/L25 subcomplex. Contacts the 5S and 23S rRNAs.

In terms of biological role, this is one of the proteins that bind and probably mediate the attachment of the 5S RNA into the large ribosomal subunit, where it forms part of the central protuberance. In Corynebacterium jeikeium (strain K411), this protein is Large ribosomal subunit protein uL18.